The chain runs to 192 residues: MGALKLVFVTGNANKLREVKKILSTDVSSEDSLKIEVDSKALDLPEVQGSTQDVAREKSRAAAKLIGGPCITEDTALCFKAMGGLPGPYIKWFLEKLGLDGLNKMLQGFSSTEATALCTFAYCEPGKEPILFEGATEGNIVPARGPTNFGWDPIFEVSGTGMTYAEMPAEQKNSLSHRSKALDKLRQHFSRR.

10–15 is an ITP binding site; sequence TGNANK. Glutamate 46 provides a ligand contact to Mg(2+). ITP is bound by residues lysine 58, 74-75, lysine 91, 149-152, lysine 172, and 177-178; these read DT, FGWD, and HR.

This sequence belongs to the HAM1 NTPase family. In terms of assembly, homodimer. Mg(2+) serves as cofactor. It depends on Mn(2+) as a cofactor.

It localises to the cytoplasm. The protein resides in the nucleus. It carries out the reaction ITP + H2O = IMP + diphosphate + H(+). The enzyme catalyses dITP + H2O = dIMP + diphosphate + H(+). The catalysed reaction is XTP + H2O = XMP + diphosphate + H(+). Pyrophosphatase that hydrolyzes non-canonical purine nucleotides such as inosine triphosphate (ITP), deoxyinosine triphosphate (dITP) or xanthosine 5'-triphosphate (XTP) to their respective monophosphate derivatives. The enzyme does not distinguish between the deoxy- and ribose forms. Probably excludes non-canonical purines from RNA and DNA precursor pools, thus preventing their incorporation into RNA and DNA and avoiding chromosomal lesions. The protein is Inosine triphosphate pyrophosphatase of Puccinia graminis f. sp. tritici (strain CRL 75-36-700-3 / race SCCL) (Black stem rust fungus).